Consider the following 238-residue polypeptide: 7-cyano-7-deazaguanine synthase (238 aa).

14–24 (FSGGQDSTTCL) contacts ATP. The Zn(2+) site is built by cysteine 195, cysteine 204, cysteine 207, and cysteine 210.

The protein belongs to the QueC family. It depends on Zn(2+) as a cofactor.

The catalysed reaction is 7-carboxy-7-deazaguanine + NH4(+) + ATP = 7-cyano-7-deazaguanine + ADP + phosphate + H2O + H(+). Its pathway is purine metabolism; 7-cyano-7-deazaguanine biosynthesis. Functionally, catalyzes the ATP-dependent conversion of 7-carboxy-7-deazaguanine (CDG) to 7-cyano-7-deazaguanine (preQ(0)). The polypeptide is 7-cyano-7-deazaguanine synthase (Baumannia cicadellinicola subsp. Homalodisca coagulata).